We begin with the raw amino-acid sequence, 212 residues long: Probable GTP-binding protein EngB (212 aa).

Residues Ser-38–Pro-210 enclose the EngB-type G domain. GTP is bound by residues Gly-46–Ser-53, Gly-73–Gln-77, Asp-91–Gly-94, Thr-158–Asp-161, and Val-189–Asn-191. Mg(2+)-binding residues include Ser-53 and Thr-75.

This sequence belongs to the TRAFAC class TrmE-Era-EngA-EngB-Septin-like GTPase superfamily. EngB GTPase family. It depends on Mg(2+) as a cofactor.

Necessary for normal cell division and for the maintenance of normal septation. This is Probable GTP-binding protein EngB from Rickettsia africae (strain ESF-5).